The primary structure comprises 212 residues: Glycerol-3-phosphate acyltransferase (212 aa).

5 helical membrane-spanning segments follow: residues 5 to 25, 53 to 73, 80 to 100, 112 to 132, and 138 to 158; these read ALGM…ILVC, VAAA…VWLA, PLYL…PVFF, FGAI…TWLL, and GYSS…VWWF.

This sequence belongs to the PlsY family. Probably interacts with PlsX.

The protein localises to the cell inner membrane. The enzyme catalyses an acyl phosphate + sn-glycerol 3-phosphate = a 1-acyl-sn-glycero-3-phosphate + phosphate. Its pathway is lipid metabolism; phospholipid metabolism. Functionally, catalyzes the transfer of an acyl group from acyl-phosphate (acyl-PO(4)) to glycerol-3-phosphate (G3P) to form lysophosphatidic acid (LPA). This enzyme utilizes acyl-phosphate as fatty acyl donor, but not acyl-CoA or acyl-ACP. The sequence is that of Glycerol-3-phosphate acyltransferase from Serratia proteamaculans (strain 568).